We begin with the raw amino-acid sequence, 197 residues long: dTTP/UTP pyrophosphatase (197 aa).

Residue D70 is the Proton acceptor of the active site.

The protein belongs to the Maf family. YhdE subfamily. It depends on a divalent metal cation as a cofactor.

The protein resides in the cytoplasm. It catalyses the reaction dTTP + H2O = dTMP + diphosphate + H(+). The enzyme catalyses UTP + H2O = UMP + diphosphate + H(+). Its function is as follows. Nucleoside triphosphate pyrophosphatase that hydrolyzes dTTP and UTP. May have a dual role in cell division arrest and in preventing the incorporation of modified nucleotides into cellular nucleic acids. This is dTTP/UTP pyrophosphatase (yceF2) from Shigella sonnei (strain Ss046).